The chain runs to 311 residues: HPr kinase/phosphorylase (311 aa).

Residues His-138 and Lys-159 contribute to the active site. Gly-153 to Ser-160 lines the ATP pocket. Position 160 (Ser-160) interacts with Mg(2+). The Proton acceptor; for phosphorylation activity. Proton donor; for dephosphorylation activity role is filled by Asp-177. Residues Leu-201–Asn-210 are important for the catalytic mechanism of both phosphorylation and dephosphorylation. Glu-202 is a binding site for Mg(2+). Residue Arg-243 is part of the active site. Positions Pro-264–Arg-269 are important for the catalytic mechanism of dephosphorylation.

Belongs to the HPrK/P family. Homohexamer. It depends on Mg(2+) as a cofactor.

It carries out the reaction [HPr protein]-L-serine + ATP = [HPr protein]-O-phospho-L-serine + ADP + H(+). The enzyme catalyses [HPr protein]-O-phospho-L-serine + phosphate + H(+) = [HPr protein]-L-serine + diphosphate. Functionally, catalyzes the ATP- as well as the pyrophosphate-dependent phosphorylation of a specific serine residue in HPr, a phosphocarrier protein of the phosphoenolpyruvate-dependent sugar phosphotransferase system (PTS). HprK/P also catalyzes the pyrophosphate-producing, inorganic phosphate-dependent dephosphorylation (phosphorolysis) of seryl-phosphorylated HPr (P-Ser-HPr). The two antagonistic activities of HprK/P are regulated by several intracellular metabolites, which change their concentration in response to the absence or presence of rapidly metabolisable carbon sources (glucose, fructose, etc.) in the growth medium. Therefore, by controlling the phosphorylation state of HPr, HPrK/P is a sensor enzyme that plays a major role in the regulation of carbon metabolism and sugar transport: it mediates carbon catabolite repression (CCR), and regulates PTS-catalyzed carbohydrate uptake and inducer exclusion. The protein is HPr kinase/phosphorylase of Brevibacillus brevis (strain 47 / JCM 6285 / NBRC 100599).